The sequence spans 308 residues: Homeobox protein abdominal-A homolog (308 aa).

The homeobox DNA-binding region spans 138–197 (RRRGRQTYTRFQTLELEKEFHFNHYLTRRRRIEIAHALCLTERQIKIWFQNRRMKLKKEL). Residues 207–221 (ARREREEQDKMKNES) show a composition bias toward basic and acidic residues. The tract at residues 207–277 (ARREREEQDK…SGNLGSHLHH (71 aa)) is disordered. The segment covering 223–247 (KSAQQHHSQKQAQQEHTVVGSQQTS) has biased composition (low complexity). A compositionally biased stretch (gly residues) spans 248 to 269 (NGGGTGGGTGGSGGAGSGGSSG).

The protein belongs to the Antp homeobox family.

It is found in the nucleus. In terms of biological role, sequence-specific transcription factor which is part of a developmental regulatory system that provides cells with specific positional identities on the anterior-posterior axis. This Anopheles gambiae (African malaria mosquito) protein is Homeobox protein abdominal-A homolog.